The sequence spans 618 residues: Tyrosine-protein kinase ZAP-70 (618 aa).

One can recognise an SH2 1 domain in the interval 10–102 (FFYGSISRAE…GLPCNLRKPC (93 aa)). Residues 103-162 (NRPPGLEPQPGVFDCLRDAMVRDYVRQTWKLEGDALEQAIISQAPQVEKLIATTAHERMP) are interdomain A. Residues 163–254 (WYHSSLTREE…GLIYRLKEVC (92 aa)) enclose the SH2 2 domain. Tyr248 is subject to Phosphotyrosine. Positions 255-336 (PNSSASAAVA…KKLFLKRENL (82 aa)) are interdomain B. The interval 270-320 (AHPSTFTQPQRRVDTLNSDGYTPEPARLASSTDKPRPMPMDTSVYESPYSD) is disordered. The span at 273–289 (STFTQPQRRVDTLNSDG) shows a compositional bias: polar residues. A Phosphoserine modification is found at Ser287. Position 290 is a phosphotyrosine (Tyr290). At Tyr314 the chain carries Phosphotyrosine; by LCK. A Phosphotyrosine modification is found at Tyr318. The region spanning 337–597 (LVADIELGCG…VEQRMRNYYY (261 aa)) is the Protein kinase domain. ATP-binding positions include 343-351 (LGCGNFGSV) and Lys368. Asp460 serves as the catalytic Proton acceptor. Phosphotyrosine is present on residues Tyr491 and Tyr492. A Glycyl lysine isopeptide (Lys-Gly) (interchain with G-Cter in ubiquitin) cross-link involves residue Lys543.

Belongs to the protein kinase superfamily. Tyr protein kinase family. SYK/ZAP-70 subfamily. As to quaternary structure, interacts with CD247/CD3Z; this interaction docks ZAP70 at the stimulated TCR. Interacts with NFAM1. Interacts with adapter protein SLA; this interaction negatively regulates T-cell receptor signaling. Interacts with VAV1. Interacts with CBL; this interaction promotes ubiquitination, internalization and subsequent degradation of CD247/CD3Z. Identified in a complex with CBL and UBE2L3. Interacts with SHB. Interacts with adapter protein SLA2; this interaction negatively regulates T-cell receptor signaling. Interacts with CBLB. Interacts (via SH2 domains) with RHOH; this interaction regulates ZAP70 subcellular localization. Interacts with DEF6. Interacts (ubiquitinated form) with OTUD7B and UBASH3B. Post-translationally, phosphorylated on tyrosine residues upon T-cell antigen receptor (TCR) stimulation. Phosphorylation of Tyr-314 and Tyr-314 are essential for ZAP70 positive function on T-lymphocyte activation whereas Tyr-290 has a negative regulatory role. Within the C-terminal kinase domain, Tyr-491 and Tyr-492 are phosphorylated after TCR induction, Tyr-491 playing a negative regulatory role and Tyr-492 a positive. Tyr-492 is dephosphorylated by PTN22. Ubiquitinated in response to T cell activation. Deubiquitinated by OTUD7B. In terms of tissue distribution, isoform 1 and isoform 2 are expressed in thymus, spleen and lymph nodes.

It localises to the cytoplasm. The protein resides in the cell membrane. The catalysed reaction is L-tyrosyl-[protein] + ATP = O-phospho-L-tyrosyl-[protein] + ADP + H(+). Activated by phosphorylation at Tyr-492 in the activation loop. Its function is as follows. Tyrosine kinase that plays an essential role in regulation of the adaptive immune response. Regulates motility, adhesion and cytokine expression of mature T-cells, as well as thymocyte development. Also contributes to the development and activation of primary B-lymphocytes. When antigen presenting cells (APC) activate T-cell receptor (TCR), a serie of phosphorylations lead to the recruitment of ZAP70 to the doubly phosphorylated TCR component CD3Z through ITAM motif at the plasma membrane. This recruitment serves to localization to the stimulated TCR and to relieve its autoinhibited conformation. Release of ZAP70 active conformation is further stabilized by phosphorylation mediated by LCK. Subsequently, ZAP70 phosphorylates at least 2 essential adapter proteins: LAT and LCP2. In turn, a large number of signaling molecules are recruited and ultimately lead to lymphokine production, T-cell proliferation and differentiation. Furthermore, ZAP70 controls cytoskeleton modifications, adhesion and mobility of T-lymphocytes, thus ensuring correct delivery of effectors to the APC. ZAP70 is also required for TCR-CD3Z internalization and degradation through interaction with the E3 ubiquitin-protein ligase CBL and adapter proteins SLA and SLA2. Thus, ZAP70 regulates both T-cell activation switch on and switch off by modulating TCR expression at the T-cell surface. During thymocyte development, ZAP70 promotes survival and cell-cycle progression of developing thymocytes before positive selection (when cells are still CD4/CD8 double negative). Additionally, ZAP70-dependent signaling pathway may also contribute to primary B-cells formation and activation through B-cell receptor (BCR). This is Tyrosine-protein kinase ZAP-70 (Zap70) from Mus musculus (Mouse).